The chain runs to 375 residues: Histidine biosynthesis bifunctional protein HisB (375 aa).

Residues 1–168 form a histidinol-phosphatase region; that stretch reads MTPILFVDRD…GIAHELADAP (168 aa). The active-site Nucleophile is the Asp8. Mg(2+) is bound by residues Asp8, Asp10, and Asp128. Asp10 (proton donor) is an active-site residue. The interval 169-375 is imidazoleglycerol-phosphate dehydratase; that stretch reads RRAVVQRNTK…TALPSTKGAL (207 aa).

In the N-terminal section; belongs to the histidinol-phosphatase family. The protein in the C-terminal section; belongs to the imidazoleglycerol-phosphate dehydratase family. Mg(2+) serves as cofactor.

The protein localises to the cytoplasm. It carries out the reaction D-erythro-1-(imidazol-4-yl)glycerol 3-phosphate = 3-(imidazol-4-yl)-2-oxopropyl phosphate + H2O. The enzyme catalyses L-histidinol phosphate + H2O = L-histidinol + phosphate. It participates in amino-acid biosynthesis; L-histidine biosynthesis; L-histidine from 5-phospho-alpha-D-ribose 1-diphosphate: step 6/9. The protein operates within amino-acid biosynthesis; L-histidine biosynthesis; L-histidine from 5-phospho-alpha-D-ribose 1-diphosphate: step 8/9. The protein is Histidine biosynthesis bifunctional protein HisB of Xanthomonas campestris pv. campestris (strain 8004).